The following is a 547-amino-acid chain: Glucose-6-phosphate isomerase (547 aa).

Glu-351 (proton donor) is an active-site residue. Active-site residues include His-382 and Lys-509.

This sequence belongs to the GPI family.

It is found in the cytoplasm. The catalysed reaction is alpha-D-glucose 6-phosphate = beta-D-fructose 6-phosphate. It functions in the pathway carbohydrate biosynthesis; gluconeogenesis. Its pathway is carbohydrate degradation; glycolysis; D-glyceraldehyde 3-phosphate and glycerone phosphate from D-glucose: step 2/4. Catalyzes the reversible isomerization of glucose-6-phosphate to fructose-6-phosphate. The sequence is that of Glucose-6-phosphate isomerase from Coxiella burnetii (strain RSA 493 / Nine Mile phase I).